The primary structure comprises 130 residues: Small ribosomal subunit protein uS9 (130 aa).

Residues 104–130 form a disordered region; that stretch reads LTRDPRMKERKKYGLKKARRAPQFSKR. Positions 111 to 130 are enriched in basic residues; that stretch reads KERKKYGLKKARRAPQFSKR.

The protein belongs to the universal ribosomal protein uS9 family.

The chain is Small ribosomal subunit protein uS9 from Ruminiclostridium cellulolyticum (strain ATCC 35319 / DSM 5812 / JCM 6584 / H10) (Clostridium cellulolyticum).